Consider the following 151-residue polypeptide: MAFEKLGEKFSNFFAMDNEDDYQDQEDEQAQQPAPEQPVDNHYRSNKVVSMATPAGKTAKIVVYEPRVYSDAKEIGSHLLNNRAVVINFDRIGSDDATRIVDFLTGTVFAINGEIKRVGESIFLVTPANFEIDGSLASTIDSDGLNLSSQH.

Residues 17–29 (DNEDDYQDQEDEQ) are compositionally biased toward acidic residues. The tract at residues 17-42 (DNEDDYQDQEDEQAQQPAPEQPVDNH) is disordered.

The protein belongs to the SepF family. Homodimer. Interacts with FtsZ.

Its subcellular location is the cytoplasm. In terms of biological role, cell division protein that is part of the divisome complex and is recruited early to the Z-ring. Probably stimulates Z-ring formation, perhaps through the cross-linking of FtsZ protofilaments. Its function overlaps with FtsA. This is Cell division protein SepF from Lacticaseibacillus casei (strain BL23) (Lactobacillus casei).